Here is a 548-residue protein sequence, read N- to C-terminus: Non-structural protein NS1 (548 aa).

Belongs to the orbivirus non-structural protein NS1 family.

The chain is Non-structural protein NS1 (Segment-5) from African horse sickness virus (AHSV).